Consider the following 339-residue polypeptide: Heat-inducible transcription repressor HrcA (339 aa).

The protein belongs to the HrcA family.

Its function is as follows. Negative regulator of class I heat shock genes (grpE-dnaK-dnaJ and groELS operons). Prevents heat-shock induction of these operons. This Paraburkholderia phytofirmans (strain DSM 17436 / LMG 22146 / PsJN) (Burkholderia phytofirmans) protein is Heat-inducible transcription repressor HrcA.